The sequence spans 204 residues: Large ribosomal subunit protein bL25 (204 aa).

Belongs to the bacterial ribosomal protein bL25 family. CTC subfamily. In terms of assembly, part of the 50S ribosomal subunit; part of the 5S rRNA/L5/L18/L25 subcomplex. Contacts the 5S rRNA. Binds to the 5S rRNA independently of L5 and L18.

Functionally, this is one of the proteins that binds to the 5S RNA in the ribosome where it forms part of the central protuberance. The polypeptide is Large ribosomal subunit protein bL25 (Rhizobium etli (strain ATCC 51251 / DSM 11541 / JCM 21823 / NBRC 15573 / CFN 42)).